Reading from the N-terminus, the 307-residue chain is tRNA dimethylallyltransferase (307 aa).

9-16 (GPTAVGKT) is an ATP binding site. 11–16 (TAVGKT) lines the substrate pocket. The interval 34 to 37 (DSMQ) is interaction with substrate tRNA.

This sequence belongs to the IPP transferase family. Monomer. Mg(2+) is required as a cofactor.

It catalyses the reaction adenosine(37) in tRNA + dimethylallyl diphosphate = N(6)-dimethylallyladenosine(37) in tRNA + diphosphate. Catalyzes the transfer of a dimethylallyl group onto the adenine at position 37 in tRNAs that read codons beginning with uridine, leading to the formation of N6-(dimethylallyl)adenosine (i(6)A). The chain is tRNA dimethylallyltransferase from Limosilactobacillus reuteri (strain DSM 20016) (Lactobacillus reuteri).